A 154-amino-acid chain; its full sequence is 6,7-dimethyl-8-ribityllumazine synthase (154 aa).

5-amino-6-(D-ribitylamino)uracil contacts are provided by residues Phe22, 56–58 (AFE), and 80–82 (AVI). 85-86 (AT) provides a ligand contact to (2S)-2-hydroxy-3-oxobutyl phosphate. The Proton donor role is filled by His88. 5-amino-6-(D-ribitylamino)uracil is bound at residue Phe113. Position 127 (Arg127) interacts with (2S)-2-hydroxy-3-oxobutyl phosphate.

The protein belongs to the DMRL synthase family. Forms an icosahedral capsid composed of 60 subunits, arranged as a dodecamer of pentamers.

The catalysed reaction is (2S)-2-hydroxy-3-oxobutyl phosphate + 5-amino-6-(D-ribitylamino)uracil = 6,7-dimethyl-8-(1-D-ribityl)lumazine + phosphate + 2 H2O + H(+). It functions in the pathway cofactor biosynthesis; riboflavin biosynthesis; riboflavin from 2-hydroxy-3-oxobutyl phosphate and 5-amino-6-(D-ribitylamino)uracil: step 1/2. Functionally, catalyzes the formation of 6,7-dimethyl-8-ribityllumazine by condensation of 5-amino-6-(D-ribitylamino)uracil with 3,4-dihydroxy-2-butanone 4-phosphate. This is the penultimate step in the biosynthesis of riboflavin. This Geobacillus thermodenitrificans (strain NG80-2) protein is 6,7-dimethyl-8-ribityllumazine synthase.